The chain runs to 305 residues: UDP-N-acetylenolpyruvoylglucosamine reductase 2 (305 aa).

An FAD-binding PCMH-type domain is found at 33–197 (VGGKADVFVA…LEARFELEEG (165 aa)). The active site involves arginine 176. Serine 226 acts as the Proton donor in catalysis. Residue glutamate 296 is part of the active site.

It belongs to the MurB family. FAD serves as cofactor.

Its subcellular location is the cytoplasm. The enzyme catalyses UDP-N-acetyl-alpha-D-muramate + NADP(+) = UDP-N-acetyl-3-O-(1-carboxyvinyl)-alpha-D-glucosamine + NADPH + H(+). It functions in the pathway cell wall biogenesis; peptidoglycan biosynthesis. Its function is as follows. Cell wall formation. In Bacillus cereus (strain ATCC 14579 / DSM 31 / CCUG 7414 / JCM 2152 / NBRC 15305 / NCIMB 9373 / NCTC 2599 / NRRL B-3711), this protein is UDP-N-acetylenolpyruvoylglucosamine reductase 2 (murB2).